A 178-amino-acid polypeptide reads, in one-letter code: Large ribosomal subunit protein uL6 (178 aa).

It belongs to the universal ribosomal protein uL6 family. Part of the 50S ribosomal subunit.

Its function is as follows. This protein binds to the 23S rRNA, and is important in its secondary structure. It is located near the subunit interface in the base of the L7/L12 stalk, and near the tRNA binding site of the peptidyltransferase center. This is Large ribosomal subunit protein uL6 from Clavibacter sepedonicus (Clavibacter michiganensis subsp. sepedonicus).